A 351-amino-acid polypeptide reads, in one-letter code: Phosphoribosylformylglycinamidine cyclo-ligase (351 aa).

The protein belongs to the AIR synthase family.

The protein resides in the cytoplasm. It catalyses the reaction 2-formamido-N(1)-(5-O-phospho-beta-D-ribosyl)acetamidine + ATP = 5-amino-1-(5-phospho-beta-D-ribosyl)imidazole + ADP + phosphate + H(+). It functions in the pathway purine metabolism; IMP biosynthesis via de novo pathway; 5-amino-1-(5-phospho-D-ribosyl)imidazole from N(2)-formyl-N(1)-(5-phospho-D-ribosyl)glycinamide: step 2/2. The protein is Phosphoribosylformylglycinamidine cyclo-ligase of Xylella fastidiosa (strain 9a5c).